A 48-amino-acid polypeptide reads, in one-letter code: Large ribosomal subunit protein eL40 (48 aa).

The protein belongs to the eukaryotic ribosomal protein eL40 family.

The chain is Large ribosomal subunit protein eL40 from Methanocella arvoryzae (strain DSM 22066 / NBRC 105507 / MRE50).